The following is a 419-amino-acid chain: CCA-adding enzyme (419 aa).

Residues Ser54 and Arg57 each coordinate ATP. Residues Ser54 and Arg57 each coordinate CTP. Mg(2+) contacts are provided by Asp66, Asp68, and Asp118. ATP-binding residues include His141, Lys161, and Tyr170. The CTP site is built by His141, Lys161, and Tyr170.

Belongs to the tRNA nucleotidyltransferase/poly(A) polymerase family. Archaeal CCA-adding enzyme subfamily. Homodimer. It depends on Mg(2+) as a cofactor.

The enzyme catalyses a tRNA precursor + 2 CTP + ATP = a tRNA with a 3' CCA end + 3 diphosphate. It carries out the reaction a tRNA with a 3' CCA end + 2 CTP + ATP = a tRNA with a 3' CCACCA end + 3 diphosphate. Catalyzes the addition and repair of the essential 3'-terminal CCA sequence in tRNAs without using a nucleic acid template. Adds these three nucleotides in the order of C, C, and A to the tRNA nucleotide-73, using CTP and ATP as substrates and producing inorganic pyrophosphate. tRNA 3'-terminal CCA addition is required both for tRNA processing and repair. Also involved in tRNA surveillance by mediating tandem CCA addition to generate a CCACCA at the 3' terminus of unstable tRNAs. While stable tRNAs receive only 3'-terminal CCA, unstable tRNAs are marked with CCACCA and rapidly degraded. This Pyrobaculum aerophilum (strain ATCC 51768 / DSM 7523 / JCM 9630 / CIP 104966 / NBRC 100827 / IM2) protein is CCA-adding enzyme.